We begin with the raw amino-acid sequence, 687 residues long: Glycine--tRNA ligase beta subunit (687 aa).

This sequence belongs to the class-II aminoacyl-tRNA synthetase family. Tetramer of two alpha and two beta subunits.

It localises to the cytoplasm. The catalysed reaction is tRNA(Gly) + glycine + ATP = glycyl-tRNA(Gly) + AMP + diphosphate. This Geobacter sp. (strain M21) protein is Glycine--tRNA ligase beta subunit.